The chain runs to 198 residues: Beta-crystallin A1-1 (198 aa).

The segment at 1-13 is N-terminal arm; sequence MAQINPLPVPLGP. Beta/gamma crystallin 'Greek key' domains follow at residues 14-53 and 54-100; these read WKITVYDQENFQGKRMEFTSSCTNIMECGFDNIRSLKVEC and GAWI…RPIC. Positions 101–106 are connecting peptide; the sequence is SANHKE. 2 consecutive Beta/gamma crystallin 'Greek key' domains span residues 107-148 and 149-197; these read SKLV…KVQC and GAWV…RRIQ.

The protein belongs to the beta/gamma-crystallin family. In terms of assembly, homo/heterodimer, or complexes of higher-order. The structure of beta-crystallin oligomers seems to be stabilized through interactions between the N-terminal arms. In terms of processing, the N-terminus is blocked.

Its function is as follows. Crystallins are the dominant structural components of the vertebrate eye lens. This Aquarana catesbeiana (American bullfrog) protein is Beta-crystallin A1-1.